Reading from the N-terminus, the 477-residue chain is PTS system glucose-specific EIICB component (477 aa).

The PTS EIIC type-1 domain maps to 1–388 (MFKNVFANLQ…FNLDTPGREN (388 aa)). 10 helical membrane passes run 15 to 35 (SLMLPVSVLPIAGILLGIGSA), 51 to 71 (TGGSVFSNMPLIFAIGVALGF), 76 to 96 (GVAALAAVVSYGILIQTLTAV), 112 to 132 (HLSDTGILGGIIAGAISAYMF), 152 to 172 (FVPIISGLSAILIGVILSLIW), 191 to 211 (PILAFALYGLVERALVPFGLH), 250 to 270 (LSGGFIFKMYGLPGAALAIWH), 280 to 300 (IGSIMISAALTAFLTGITEPI), 304 to 324 (FIIVAPVLYVIHAILAGLSFP), and 357 to 377 (FPIIGILYGLLYYILFYLFII). A PTS EIIB type-1 domain is found at 399–477 (NEIAPYIITA…TAMDECIKNI (79 aa)). The active-site Phosphocysteine intermediate; for EIIB activity is C421. C421 is modified (phosphocysteine).

The protein resides in the cell inner membrane. It catalyses the reaction N(pros)-phospho-L-histidyl-[protein] + D-glucose(out) = D-glucose 6-phosphate(in) + L-histidyl-[protein]. In terms of biological role, the phosphoenolpyruvate-dependent sugar phosphotransferase system (sugar PTS), a major carbohydrate active transport system, catalyzes the phosphorylation of incoming sugar substrates concomitantly with their translocation across the cell membrane. The enzyme II complex composed of PtsG and Crr is involved in glucose transport. This Buchnera aphidicola subsp. Acyrthosiphon pisum (strain APS) (Acyrthosiphon pisum symbiotic bacterium) protein is PTS system glucose-specific EIICB component (ptsG).